Consider the following 180-residue polypeptide: DNA-directed RNA polymerase subunit Rpo7 (180 aa).

The S1 motif domain maps to 82–165 (QEVVEGEVLQ…RLPRIALTMR (84 aa)).

Belongs to the eukaryotic RPB7/RPC8 RNA polymerase subunit family. In terms of assembly, part of the 13-subunit RNA polymerase complex. Forms a stalk with Rpo4 that extends from the main structure.

Its subcellular location is the cytoplasm. The catalysed reaction is RNA(n) + a ribonucleoside 5'-triphosphate = RNA(n+1) + diphosphate. Its function is as follows. DNA-dependent RNA polymerase (RNAP) catalyzes the transcription of DNA into RNA using the four ribonucleoside triphosphates as substrates. The highly mobile Rpo4/Rpo7 heterodimer is conditionally required for transcription initiation. The polypeptide is DNA-directed RNA polymerase subunit Rpo7 (Saccharolobus shibatae (strain ATCC 51178 / DSM 5389 / JCM 8931 / NBRC 15437 / B12) (Sulfolobus shibatae)).